The sequence spans 139 residues: Histone H2B (139 aa).

A compositionally biased stretch (basic and acidic residues) spans 1-10 (MAPKVAEKKP). The interval 1–47 (MAPKVAEKKPSLAGKAPAGKAPAEKKEAGKKTTTATGEKKKRTKARK) is disordered. Residues Lys8 and Lys9 each carry the N6-acetyllysine; alternate modification. Residues Lys8 and Lys9 each participate in a glycyl lysine isopeptide (Lys-Gly) (interchain with G-Cter in SUMO); alternate cross-link. Lys15 carries the N6-acetyllysine modification. An N6-acetyllysine; alternate modification is found at Lys25. Lys25 is covalently cross-linked (Glycyl lysine isopeptide (Lys-Gly) (interchain with G-Cter in SUMO); alternate). Lys26 is covalently cross-linked (Glycyl lysine isopeptide (Lys-Gly) (interchain with G-Cter in SUMO)). Lys133 is covalently cross-linked (Glycyl lysine isopeptide (Lys-Gly) (interchain with G-Cter in ubiquitin)).

The protein belongs to the histone H2B family. In terms of assembly, the nucleosome is a histone octamer containing two molecules each of H2A, H2B, H3 and H4 assembled in one H3-H4 heterotetramer and two H2A-H2B heterodimers. The octamer wraps approximately 147 bp of DNA. In terms of processing, monoubiquitinated by the UBC2-BRE1 complex to form H2BK123ub1. H2BK123ub1 gives a specific tag for epigenetic transcriptional activation and is also prerequisite for H3K4me and H3K79me formation. H2BK123ub1 also modulates the formation of double-strand breaks during meiosis and is a prerequisite for DNA-damage checkpoint activation. Post-translationally, acetylated by GCN5 to form H2BK11ac and H2BK16ac. H2BK16ac can also be formed by ESA1. Acetylation of N-terminal lysines and particularly formation of H2BK11acK16ac has a positive effect on transcription. Sumoylation to form H2BK6su or H2BK7su, and probably also H2BK16su or H2BK17su, occurs preferentially near the telomeres and represses gene transcription.

It is found in the nucleus. The protein resides in the chromosome. In terms of biological role, core component of nucleosome. Nucleosomes wrap and compact DNA into chromatin, limiting DNA accessibility to the cellular machineries which require DNA as a template. Histones thereby play a central role in transcription regulation, DNA repair, DNA replication and chromosomal stability. DNA accessibility is regulated via a complex set of post-translational modifications of histones, also called histone code, and nucleosome remodeling. The polypeptide is Histone H2B (HTB1) (Yarrowia lipolytica (strain CLIB 122 / E 150) (Yeast)).